The sequence spans 239 residues: MLTRKQQELLLFIHERMKESGVPPSFDEMKDALDLASKSGIHRLITALEERGFIRRLPNRARALEVIKLPEAYSPSIQPRRGFSPSVIEGSLGKPQPAAAPAPAKPVADNGNSVSVPVMGRIAAGVPISAIQNNTHDIVVPADMLGSGEHYALEVKGDSMIDAGIFDGDTVIIRNGSTASPGDIVVALVDDEEATLKRFRRKGASIALEAANPAYETRIFGPDRVKVQGKLVGLIRRYH.

A DNA-binding region (H-T-H motif) is located at residues 26-46; the sequence is FDEMKDALDLASKSGIHRLIT. A disordered region spans residues 80–108; sequence RRGFSPSVIEGSLGKPQPAAAPAPAKPVA. Catalysis depends on for autocatalytic cleavage activity residues S159 and K197.

Belongs to the peptidase S24 family. In terms of assembly, homodimer.

It catalyses the reaction Hydrolysis of Ala-|-Gly bond in repressor LexA.. Represses a number of genes involved in the response to DNA damage (SOS response), including recA and lexA. In the presence of single-stranded DNA, RecA interacts with LexA causing an autocatalytic cleavage which disrupts the DNA-binding part of LexA, leading to derepression of the SOS regulon and eventually DNA repair. This chain is LexA repressor, found in Rhizobium leguminosarum bv. trifolii (strain WSM2304).